The primary structure comprises 313 residues: Methionyl-tRNA formyltransferase (313 aa).

Serine 109–proline 112 is a (6S)-5,6,7,8-tetrahydrofolate binding site.

This sequence belongs to the Fmt family.

The catalysed reaction is L-methionyl-tRNA(fMet) + (6R)-10-formyltetrahydrofolate = N-formyl-L-methionyl-tRNA(fMet) + (6S)-5,6,7,8-tetrahydrofolate + H(+). In terms of biological role, attaches a formyl group to the free amino group of methionyl-tRNA(fMet). The formyl group appears to play a dual role in the initiator identity of N-formylmethionyl-tRNA by promoting its recognition by IF2 and preventing the misappropriation of this tRNA by the elongation apparatus. This chain is Methionyl-tRNA formyltransferase, found in Pelotomaculum thermopropionicum (strain DSM 13744 / JCM 10971 / SI).